The primary structure comprises 456 residues: Solute carrier family 49 member 4 homolog (456 aa).

The Cytoplasmic segment spans residues 1–29 (MGLEWSSPGERQPLLFPGGPRSPRVFGRR). Residues 14 to 15 (LL) carry the Di-leucine motif; mediates lysosomal localization motif. The chain crosses the membrane as a helical span at residues 30–50 (WLVLLLFSVLAFLQGLVWNSW). Over 51–67 (GPIQISARTAYKFSGLD) the chain is Lumenal. The chain crosses the membrane as a helical span at residues 68–88 (IALLVLWGPIGFLPCFLFMWL). At 89 to 95 (MDNRGLR) the chain is on the cytoplasmic side. The helical transmembrane segment at 96–116 (ITVLLTALLMVLGAGLRCVPV) threads the bilayer. Topologically, residues 117-123 (EDLAIRR) are lumenal. A helical transmembrane segment spans residues 124-144 (ILIHGGQLLNGFAGPTVMNAA). The Cytoplasmic portion of the chain corresponds to 145–162 (PFLSTTWFAPDERATATA). The helical transmembrane segment at 163–183 (IASMLNYLGGACAFLVGPLVV) threads the bilayer. Residues 184-207 (PAPNSTSGLLLYSGSTDAIKDRIE) are Lumenal-facing. A glycan (N-linked (GlcNAc...) asparagine) is linked at Asn-187. A helical membrane pass occupies residues 208 to 228 (AVMYAEFGIIFVVFAAILAYF). Topologically, residues 229-259 (PARPPVPPSVAAASRRLSYRTSIFRLLSNLR) are cytoplasmic. A helical membrane pass occupies residues 260–280 (FLLIVLAYAIPLGFYSGWIGV). Over 281 to 292 (LDLILTPVHVTQ) the chain is Lumenal. The chain crosses the membrane as a helical span at residues 293–313 (VDAGWVGFWSIVGGCVVGIAV). Topologically, residues 314-326 (GRFADSIRGVLKP) are cytoplasmic. Residues 327–347 (ILLLLFSGATLSATWFTLTFL) traverse the membrane as a helical segment. Topologically, residues 348-362 (SNVTHLPLTTATLYT) are lumenal. The N-linked (GlcNAc...) asparagine glycan is linked to Asn-349. The chain crosses the membrane as a helical span at residues 363-383 (SCILIGVFLNGTVPIFFELFV). The Cytoplasmic segment spans residues 384–392 (ETVYPIPEG). The helical transmembrane segment at 393 to 413 (IACGVVTFLSNIFMGVLLVFL) threads the bilayer. Over 414–420 (TMYQMEL) the chain is Lumenal. A helical membrane pass occupies residues 421-441 (SWLNWCLTGSCFLSLFFIACF). The Cytoplasmic portion of the chain corresponds to 442–456 (RESYDRLYLDVFVSV).

Belongs to the major facilitator superfamily.

The protein resides in the lysosome membrane. The catalysed reaction is pyridoxine(out) + n H(+)(out) = pyridoxine(in) + n H(+)(in). Its function is as follows. Mediates H(+)-dependent pyridoxine transport. This chain is Solute carrier family 49 member 4 homolog (slc49a4), found in Xenopus laevis (African clawed frog).